Consider the following 78-residue polypeptide: Large ribosomal subunit protein bL28 (78 aa).

This sequence belongs to the bacterial ribosomal protein bL28 family.

In Aromatoleum aromaticum (strain DSM 19018 / LMG 30748 / EbN1) (Azoarcus sp. (strain EbN1)), this protein is Large ribosomal subunit protein bL28.